The primary structure comprises 66 residues: Opicalcin-1 (66 aa).

The signal sequence occupies residues 1 to 22; sequence MKPSLIIVTFIVVFMAISCVAA. Residues 23–31 constitute a propeptide that is removed on maturation; the sequence is DDEQETWIE. 3 disulfide bridges follow: C36-C50, C43-C54, and C49-C65. The tract at residues 55-57 is essential for stimulation of [3H]ryanodine binding to RYR1; the sequence is KRR.

It belongs to the scorpion calcin family. As to expression, expressed by the venom gland.

It is found in the secreted. This toxin stabilizes ryanodine receptor 1 (RyR1) opening in a long-lasting subconductance state (35% of the full conductance state). Furthermore, it triggers calcium release from sarcoplasmic vesicles (2 nM are enough to induce a sharp release, and 67% of the total calcium is released after toxin (100 nM) addition) probably by acting as a cell-penetrating peptide (CPP). In addition, it has been shown to dose-dependently stimulate ryanodine binding to RyR1 (EC(50)=0.3 nM). It also augments the bell-shaped calcium-[3H]ryanodine binding curve that is maximal at about 10 uM calcium concentration. It binds a different site as ryanodine. It acts synergistically with caffeine. In vivo, intracerebroventricular injection into mice induces neurotoxic symptoms, followed by death. This Opistophthalmus carinatus (African yellow leg scorpion) protein is Opicalcin-1.